The chain runs to 603 residues: Prosaposin receptor GPR37 (603 aa).

The first 26 residues, 1–26, serve as a signal peptide directing secretion; that stretch reads MPAPGAPLSRTSRLLLLLLFKVSVSA. The Extracellular segment spans residues 27-255; the sequence is ALSFVPEPRN…QESYGAYAVM (229 aa). Residue Asn-36 is glycosylated (N-linked (GlcNAc...) asparagine). The segment at 39–232 is disordered; that stretch reads CLGESCSPLI…GGPRRGNSTN (194 aa). Basic and acidic residues-rich tracts occupy residues 51-79, 145-158, and 165-175; these read RSRD…EAEV, TSER…RDEI, and HSVKTEPEPRD. N-linked (GlcNAc...) asparagine glycosylation is found at Asn-212 and Asn-229. Residues 256–276 traverse the membrane as a helical segment; that stretch reads CLSVVIFGTGIIGNLAVMCIV. Residues 277-289 are Cytoplasmic-facing; that stretch reads CHNYYMRSISNSL. A helical membrane pass occupies residues 290-310; the sequence is LANLAFWDFLIIFFCLPLVIF. The Extracellular portion of the chain corresponds to 311–325; the sequence is HELTKKWLLEDFSCK. A disulfide bridge connects residues Cys-324 and Cys-409. The helical transmembrane segment at 326–346 threads the bilayer; that stretch reads IVPYIEVASLGVTTFTLCALC. The Cytoplasmic segment spans residues 347 to 369; sequence IDRFRAATNVQMYYEMIENCSST. The chain crosses the membrane as a helical span at residues 370–390; that stretch reads TAKLAVIWVGALLLALPEVVL. Topologically, residues 391–433 are extracellular; that stretch reads RQLSKEDLGFSGQAPAERCVIKISPDLPDTIYVLALTYDGARL. The chain crosses the membrane as a helical span at residues 434–454; it reads WWYFGCYFCLPTLFTITCSLV. The Cytoplasmic segment spans residues 455-483; that stretch reads TARKIRKAEKASTRGNKRQIHLESQMNCT. A helical transmembrane segment spans residues 484–504; the sequence is VVALTILYGFCIIPENICNIV. At 505-521 the chain is on the extracellular side; sequence TAYMATGVSQQTMDLLN. Residues 522–542 traverse the membrane as a helical segment; sequence IISQFLLFFKSCVTPVLLFCL. Topologically, residues 543–603 are cytoplasmic; it reads CRPFSRAFME…STFASVGTHC (61 aa).

This sequence belongs to the G-protein coupled receptor 1 family. As to quaternary structure, forms a complex with PRKN, STUB1 and HSP70. The amount of STUB1 in the complex increases during ER stress. STUB1 promotes the dissociation of HSP70 from PRKN, thus facilitating PRKN-mediated GPR37 ubiquitination. Interacts with PACRG. Post-translationally, the N-terminus is cleaved by ADAM10 metalloproteinase; mediating limited proteolysis leading to the release of receptor ectodomain by shedding. In addition, cleaved by FURIN between Arg-53 and Asp-54. Ubiquitinated by PRKN in the presence of UBE2E1 and UBE2L3 in the endoplasmic reticulum. The unfolded form is specifically ubiquitinated by SYVN1, which promotes its proteasomal degradation and prevents neuronal cell death. In terms of tissue distribution, highly expressed in the brain. High levels of expression were seen in fiber tracts such as the corpus callosum, anterior commissure, fornix, internal capsule, cerebral peduncles, and stria terminalis. Additionally, moderate levels of expression were seen in the pyramidal tracts and cerebellar peduncles, as well as in the spinal tract of the trigeminal nerve and the spinal fasciculi.

It is found in the cell projection. The protein localises to the dendrite. Its subcellular location is the synapse. It localises to the cell membrane. The protein resides in the endoplasmic reticulum membrane. In terms of biological role, G-protein-coupled receptor that plays a role in several physiological pathways such as resolution of inflammatory pain and oligodendrocyte differentiation. Acts as a receptor for several ligands including prosaposin, osteocalcin or neuroprotectin D1. Ligand binding induces endocytosis, followed by an ERK phosphorylation cascade. Acts as a receptor for osteocalcin (OCN) to regulate oligodendrocyte differentiation and central nervous system myelination. Mechanistically, plays a negative role in oligodendrocyte differentiation and myelination during development via activation of the ERK1/2 signaling pathway. Therefore, regulates the stability of myelin or resistance of myelin itself to demyelination. Upon activation by neuroprotectin D1 (NPD1), promotes the activation of phagocytosis in macrophages as well as the shift in cytokine release toward an anti-inflammatory profile, and thus helps to reverse inflammatory pain. In addition, the increased macrophage phagocytosis mediates protection against sepsis upon pathogen infection. Additionally, extracellular vesicles derived from efferocyte express prosaposin, which binds to macrophage GPR37 to increase expression of the efferocytosis receptor TIM4 via an ERK-AP1-dependent signaling axis, leading to increased macrophage efferocytosis efficiency and accelerated resolution of inflammation. May also act as a maturation factor of LRP6, protecting LRP6 from the endoplasmic reticulum (ER)-associated protein degradation (ERAD) and thereby promoting the Wnt/beta-catenin signaling pathway. The sequence is that of Prosaposin receptor GPR37 (Gpr37) from Rattus norvegicus (Rat).